A 663-amino-acid polypeptide reads, in one-letter code: Putative ankyrin repeat protein R219 (663 aa).

5 ANK repeats span residues 91-118 (FRIK…GYKV), 119-148 (DFDS…KLSS), 200-229 (ANQQ…KDGT), 258-288 (DWHV…KINP), and 322-351 (YFSH…GITV).

The sequence is that of Putative ankyrin repeat protein R219 from Acanthamoeba polyphaga mimivirus (APMV).